Here is a 285-residue protein sequence, read N- to C-terminus: Bifunctional protein FolD (285 aa).

NADP(+)-binding positions include 165–167 (GRS), Ser-190, and Ile-231.

This sequence belongs to the tetrahydrofolate dehydrogenase/cyclohydrolase family. In terms of assembly, homodimer.

The enzyme catalyses (6R)-5,10-methylene-5,6,7,8-tetrahydrofolate + NADP(+) = (6R)-5,10-methenyltetrahydrofolate + NADPH. It carries out the reaction (6R)-5,10-methenyltetrahydrofolate + H2O = (6R)-10-formyltetrahydrofolate + H(+). It functions in the pathway one-carbon metabolism; tetrahydrofolate interconversion. In terms of biological role, catalyzes the oxidation of 5,10-methylenetetrahydrofolate to 5,10-methenyltetrahydrofolate and then the hydrolysis of 5,10-methenyltetrahydrofolate to 10-formyltetrahydrofolate. This chain is Bifunctional protein FolD, found in Acetivibrio thermocellus (strain ATCC 27405 / DSM 1237 / JCM 9322 / NBRC 103400 / NCIMB 10682 / NRRL B-4536 / VPI 7372) (Clostridium thermocellum).